The chain runs to 243 residues: Triosephosphate isomerase (243 aa).

Residue 9 to 11 (NWK) participates in substrate binding. The Electrophile role is filled by His-96. Glu-165 (proton acceptor) is an active-site residue. Residues Gly-171, Ser-204, and 225–226 (GG) each bind substrate.

It belongs to the triosephosphate isomerase family. Homodimer.

The protein localises to the cytoplasm. It carries out the reaction D-glyceraldehyde 3-phosphate = dihydroxyacetone phosphate. It participates in carbohydrate biosynthesis; gluconeogenesis. The protein operates within carbohydrate degradation; glycolysis; D-glyceraldehyde 3-phosphate from glycerone phosphate: step 1/1. Involved in the gluconeogenesis. Catalyzes stereospecifically the conversion of dihydroxyacetone phosphate (DHAP) to D-glyceraldehyde-3-phosphate (G3P). The polypeptide is Triosephosphate isomerase (Prochlorococcus marinus (strain MIT 9313)).